The primary structure comprises 345 residues: Molybdate/tungstate-binding protein WtpA (345 aa).

The signal sequence occupies residues 1–27 (MREGGVMKKRLLALIVAFAVLTAGCLG). Molybdate is bound by residues 41 to 42 (GS), Ser75, 160 to 162 (DPC), Glu218, and Tyr236. Tungstate-binding positions include 41 to 42 (GS), Ser75, 160 to 162 (DPC), Glu218, and Tyr236.

This sequence belongs to the bacterial solute-binding protein 1 family. WtpA subfamily. Monomer. The complex is composed of two ATP-binding proteins (WtpC), two transmembrane proteins (WtpB) and a solute-binding protein (WtpA).

Its subcellular location is the cell membrane. In terms of biological role, part of the ABC transporter complex WtpABC involved in molybdate/tungstate import. Binds tungstate and molybdate, with a preference for tungstate. The chain is Molybdate/tungstate-binding protein WtpA from Pyrococcus furiosus (strain ATCC 43587 / DSM 3638 / JCM 8422 / Vc1).